The primary structure comprises 217 residues: Peroxiredoxin Q, chloroplastic (217 aa).

Residues 1-66 (MAFAASTACC…RRRAASTGIV (66 aa)) constitute a chloroplast transit peptide. Residues 70-217 (VSKGSVPPNF…GETLKIIQNL (148 aa)) form the Thioredoxin domain. The active-site Cysteine sulfenic acid (-SOH) intermediate is the Cys112. An intrachain disulfide couples Cys112 to Cys117.

It belongs to the peroxiredoxin family. BCP/PrxQ subfamily. As to quaternary structure, monomer.

It localises to the plastid. It is found in the chloroplast thylakoid lumen. The catalysed reaction is a hydroperoxide + [thioredoxin]-dithiol = an alcohol + [thioredoxin]-disulfide + H2O. Thiol-specific peroxidase that catalyzes the reduction of hydrogen peroxide and organic hydroperoxides to water and alcohols, respectively. Plays a role in cell protection against oxidative stress by detoxifying peroxides. This is Peroxiredoxin Q, chloroplastic (PRX1) from Triticum aestivum (Wheat).